Reading from the N-terminus, the 706-residue chain is ABC transporter D family member 2, chloroplastic (706 aa).

The transit peptide at 1–44 (MILMITAPVCPPHLLLRHSSLLRHESSIGNFHRKKNPRFRTVSC) directs the protein to the chloroplast. Residue S45 is modified to N-acetylserine. The next 5 helical transmembrane spans lie at 88–108 (LAAVFALTLATTGISVGFNFL), 124–144 (FTKQLFYYLCAFAGGIPFFVL), 200–222 (TALSFSLTLVNATIDLISFSNIL), 237–257 (SFGGTAISVFLGKGLVNLNFL), and 326–346 (ILPVAVVAPMYFSGKIEFGVI). The 285-residue stretch at 88 to 372 (LAAVFALTLA…VVYQFQAISS (285 aa)) folds into the ABC transmembrane type-1 domain. Residues 430–697 (LEIEELTLQT…DAQDSLYGRL (268 aa)) enclose the ABC transporter domain. Residue 464 to 471 (GPSGSGKT) coordinates ATP. Residues 545–569 (TTPGGSNIDGSPPLLIREDGNEKPT) form a disordered region. Residues 560–569 (IREDGNEKPT) show a composition bias toward basic and acidic residues.

The protein belongs to the ABC transporter superfamily. ABCD family. Peroxisomal fatty acyl CoA transporter (TC 3.A.1.203) subfamily. Homodimer or heterodimer.

Its subcellular location is the membrane. The protein resides in the plastid. The protein localises to the chloroplast. The chain is ABC transporter D family member 2, chloroplastic (ABCC2) from Arabidopsis thaliana (Mouse-ear cress).